Reading from the N-terminus, the 205-residue chain is Troponin I, cardiac muscle (205 aa).

The tract at residues 1–38 is disordered; it reads MADQSGNAAPPPVRRRSSANYRAYATEPHAKKKSKISA. Ala2 bears the N-acetylalanine mark. Residue Ser5 is modified to Phosphoserine. Ser17 and Ser18 each carry phosphoserine; by PKA and PKD/PRKD1. Tyr21 is modified (phosphotyrosine). The residue at position 26 (Thr26) is a Phosphothreonine; by STK4/MST1. Residues 27 to 74 form an involved in binding TNC region; it reads EPHAKKKSKISASRKLQLKTLMLQIAKQELEREAVERRGEKGRALSTR. Phosphoserine; by PKC/PRKCE occurs at positions 37 and 39. Thr46 is subject to Phosphothreonine; by STK4/MST1. Ser72 is modified (phosphoserine). Residue Thr73 is modified to Phosphothreonine. Positions 124 to 145 are involved in binding TNC and actin; sequence NQKIFDLRGKFKRPTLRRVRIS. Position 138 is a phosphothreonine; by STK4/MST1 (Thr138). A Phosphoserine; by PAK3 modification is found at Ser145. Phosphothreonine is present on Thr176. A Phosphoserine modification is found at Ser194.

It belongs to the troponin I family. Binds to actin and tropomyosin. Interacts with TRIM63. Interacts with STK4/MST1. In terms of processing, phosphorylated at Ser-17 and Ser-18 by PRKD1; phosphorylation reduces myofilament calcium sensitivity. Phosphorylated preferentially at Thr-26. Phosphorylation by STK4/MST1 alters its binding affinity to TNNC1 (cardiac Tn-C) and TNNT2 (cardiac Tn-T). Phosphorylated at Ser-37 and Ser-39 by PRKCE; phosphorylation increases myocardium contractile dysfunction.

In terms of biological role, troponin I is the inhibitory subunit of troponin, the thin filament regulatory complex which confers calcium-sensitivity to striated muscle actomyosin ATPase activity. The chain is Troponin I, cardiac muscle (TNNI3) from Equus caballus (Horse).